A 437-amino-acid chain; its full sequence is Elongation factor 1-alpha (437 aa).

The region spanning 4 to 229 (KPHMNLVVIG…DQLQPPAKPV (226 aa)) is the tr-type G domain. Residues 13–20 (GHVDHGKS) form a G1 region. Position 13–20 (13–20 (GHVDHGKS)) interacts with GTP. Residue Ser-20 coordinates Mg(2+). The segment at 69-73 (GITID) is G2. The tract at residues 90–93 (DAPG) is G3. GTP is bound by residues 90 to 94 (DAPGH) and 152 to 155 (NKMD). The interval 152–155 (NKMD) is G4. The segment at 193 to 195 (SAW) is G5.

The protein belongs to the TRAFAC class translation factor GTPase superfamily. Classic translation factor GTPase family. EF-Tu/EF-1A subfamily.

The protein localises to the cytoplasm. The catalysed reaction is GTP + H2O = GDP + phosphate + H(+). GTP hydrolase that promotes the GTP-dependent binding of aminoacyl-tRNA to the A-site of ribosomes during protein biosynthesis. The sequence is that of Elongation factor 1-alpha from Aeropyrum pernix (strain ATCC 700893 / DSM 11879 / JCM 9820 / NBRC 100138 / K1).